We begin with the raw amino-acid sequence, 143 residues long: Transcription antitermination protein NusB (143 aa).

It belongs to the NusB family.

Functionally, involved in transcription antitermination. Required for transcription of ribosomal RNA (rRNA) genes. Binds specifically to the boxA antiterminator sequence of the ribosomal RNA (rrn) operons. This is Transcription antitermination protein NusB from Methylacidiphilum infernorum (isolate V4) (Methylokorus infernorum (strain V4)).